The following is a 442-amino-acid chain: tRNA modification GTPase MnmE (442 aa).

The (6S)-5-formyl-5,6,7,8-tetrahydrofolate site is built by Arg-27, Glu-84, and Lys-124. The 146-residue stretch at 221–366 (GLHVVIVGAP…LLDALQAFAE (146 aa)) folds into the TrmE-type G domain. GTP is bound by residues 231–236 (NAGKSS), 250–256 (SEEAGTT), and 275–278 (DTAG). Mg(2+)-binding residues include Ser-235 and Thr-256. Residue Lys-442 coordinates (6S)-5-formyl-5,6,7,8-tetrahydrofolate.

The protein belongs to the TRAFAC class TrmE-Era-EngA-EngB-Septin-like GTPase superfamily. TrmE GTPase family. Homodimer. Heterotetramer of two MnmE and two MnmG subunits. The cofactor is K(+).

The protein localises to the cytoplasm. Its function is as follows. Exhibits a very high intrinsic GTPase hydrolysis rate. Involved in the addition of a carboxymethylaminomethyl (cmnm) group at the wobble position (U34) of certain tRNAs, forming tRNA-cmnm(5)s(2)U34. This chain is tRNA modification GTPase MnmE, found in Brucella melitensis biotype 1 (strain ATCC 23456 / CCUG 17765 / NCTC 10094 / 16M).